A 184-amino-acid chain; its full sequence is Ribosome-recycling factor (184 aa).

The segment covering 133–162 (RDGMDNLKQDENKKEISEDERKRHETEVQK) has biased composition (basic and acidic residues). The tract at residues 133 to 163 (RDGMDNLKQDENKKEISEDERKRHETEVQKL) is disordered.

This sequence belongs to the RRF family.

The protein resides in the cytoplasm. Its function is as follows. Responsible for the release of ribosomes from messenger RNA at the termination of protein biosynthesis. May increase the efficiency of translation by recycling ribosomes from one round of translation to another. In Sphingopyxis alaskensis (strain DSM 13593 / LMG 18877 / RB2256) (Sphingomonas alaskensis), this protein is Ribosome-recycling factor.